Here is a 1170-residue protein sequence, read N- to C-terminus: Disease resistance protein LAZ5 (1170 aa).

In terms of domain architecture, TIR spans 10 to 172 (ESWQVFINFR…KIIDSIKKVL (163 aa)). E84 is a catalytic residue. Residues 193–219 (EAKNVDTFSPNSSDFPSTSIDDDLSIN) are disordered. The segment covering 198-219 (DTFSPNSSDFPSTSIDDDLSIN) has biased composition (polar residues). An NB-ARC domain is found at 261–513 (RLKEMEEKLD…DVACFFKSEN (253 aa)). 12 LRR repeats span residues 595–616 (MENV…TFDG), 622–645 (MCNL…IFKF), 646–670 (DTVR…PWEK), 677–700 (PENL…VKDT), 723–747 (AKNL…MENM), 761–785 (LTCL…KLEE), 790–813 (SENL…AGDL), 815–837 (RLVV…LGKQ), 838–861 (KALQ…VKDM), 862–885 (KHLR…SLKC), 888–904 (LSRN…LKDF), and 905–930 (SNLK…CLEY).

The catalysed reaction is NAD(+) + H2O = ADP-D-ribose + nicotinamide + H(+). Functionally, TIR-NB-LRR receptor-like protein that may play a role in plant innate immunity. May trigger hypersensitive programmed cell death in response to pathogen attack. Involved in tolerance to tobacco ringspot virus (TRSV). This Arabidopsis thaliana (Mouse-ear cress) protein is Disease resistance protein LAZ5.